Here is a 62-residue protein sequence, read N- to C-terminus: Large ribosomal subunit protein uL30 (62 aa).

It belongs to the universal ribosomal protein uL30 family. As to quaternary structure, part of the 50S ribosomal subunit.

The chain is Large ribosomal subunit protein uL30 from Geobacillus thermodenitrificans (strain NG80-2).